Consider the following 99-residue polypeptide: MAAKRIGAGKSGGGDPNILARISNSEIVSQGRRAAGDAVEVSKKLLRSTGKAAWIAGTTFLILVVPLIIEMDREAQINEIELQQASLLGAPPSPMQRGL.

The Cytoplasmic segment spans residues 2–51 (AAKRIGAGKSGGGDPNILARISNSEIVSQGRRAAGDAVEVSKKLLRSTGK). Residues 52 to 69 (AAWIAGTTFLILVVPLII) traverse the membrane as a helical segment. Over 70-99 (EMDREAQINEIELQQASLLGAPPSPMQRGL) the chain is Mitochondrial intermembrane.

The protein belongs to the Tom22 family. In terms of assembly, forms part of the preprotein translocase complex of the outer mitochondrial membrane (TOM complex) which consists of at least 6 different proteins (TOM5, TOM6, TOM7, TOM20, TOM22/TOM9 and TOM40). As to expression, expressed in young cotyledons, roots, flowers and leaves.

It is found in the mitochondrion outer membrane. In terms of biological role, central component of the receptor complex responsible for the recognition and translocation of cytosolically synthesized mitochondrial preproteins. Together with TOM20 functions as the transit peptide receptor at the surface of the mitochondrion outer membrane and facilitates the movement of preproteins into the translocation pore. The chain is Mitochondrial import receptor subunit TOM9-2 (TOM9-2) from Arabidopsis thaliana (Mouse-ear cress).